Consider the following 274-residue polypeptide: Putative ABC transporter ATP-binding protein MM_1037 (274 aa).

The 234-residue stretch at 2-235 (IRLENVSYCY…PSLKDLGLTP (234 aa)) folds into the ABC transporter domain. Residue 35–42 (GRNGSGKS) participates in ATP binding.

The protein belongs to the ABC transporter superfamily.

The protein localises to the cell membrane. Its function is as follows. Probably part of an ABC transporter complex. Responsible for energy coupling to the transport system. This chain is Putative ABC transporter ATP-binding protein MM_1037, found in Methanosarcina mazei (strain ATCC BAA-159 / DSM 3647 / Goe1 / Go1 / JCM 11833 / OCM 88) (Methanosarcina frisia).